The sequence spans 158 residues: Large ribosomal subunit protein uL18 (158 aa).

The protein belongs to the universal ribosomal protein uL18 family. As to quaternary structure, part of the 50S ribosomal subunit. Contacts the 5S and 23S rRNAs.

This is one of the proteins that bind and probably mediate the attachment of the 5S RNA into the large ribosomal subunit, where it forms part of the central protuberance. This chain is Large ribosomal subunit protein uL18, found in Picrophilus torridus (strain ATCC 700027 / DSM 9790 / JCM 10055 / NBRC 100828 / KAW 2/3).